Consider the following 310-residue polypeptide: 17-beta-hydroxysteroid dehydrogenase type 3 (310 aa).

48–77 (GQWAVITGAGDGIGKAYSFELAKRGLNVVL) is a binding site for NADP(+). A substrate-binding site is contributed by Ser185. Catalysis depends on Tyr198, which acts as the Proton acceptor.

The protein belongs to the short-chain dehydrogenases/reductases (SDR) family. 17-beta-HSD 3 subfamily. As to expression, testis.

The protein resides in the endoplasmic reticulum. The enzyme catalyses a 17beta-hydroxy steroid + NADP(+) = a 17-oxo steroid + NADPH + H(+). It catalyses the reaction testosterone + NADP(+) = androst-4-ene-3,17-dione + NADPH + H(+). The catalysed reaction is 17beta-estradiol + NADP(+) = estrone + NADPH + H(+). It carries out the reaction 3beta-hydroxyandrost-5-en-17-one + NADPH + H(+) = androst-5-en-3beta,17beta-diol + NADP(+). The enzyme catalyses 17beta-hydroxy-5alpha-androstan-3-one + NADP(+) = 5alpha-androstan-3,17-dione + NADPH + H(+). It catalyses the reaction androsterone + NADPH + H(+) = 5alpha-androstane-3alpha,17beta-diol + NADP(+). The catalysed reaction is 3beta-hydroxy-5alpha-androstan-17-one + NADPH + H(+) = 5alpha-androstane-3beta,17beta-diol + NADP(+). It carries out the reaction androst-4-ene-3,11,17-trione + NADPH + H(+) = 17beta-hydroxyandrost-4-ene-3,11-dione + NADP(+). The enzyme catalyses 11beta-hydroxyandrost-4-ene-3,17-dione + NADPH + H(+) = 11beta,17beta-dihydroxyandrost-4-ene-3-one + NADP(+). It participates in hormone biosynthesis; testosterone biosynthesis. Its pathway is steroid metabolism. Its function is as follows. Catalyzes the conversion of 17-oxosteroids to 17beta-hydroxysteroids. Favors the reduction of androstenedione to testosterone. Testosterone is the key androgen driving male development and function. Uses NADPH while the two other EDH17B enzymes use NADH. Androgens such as epiandrosterone, dehydroepiandrosterone, androsterone and androstanedione are accepted as substrates and reduced at C-17. Can reduce 11-ketoandrostenedione as well as 11beta-hydroxyandrostenedione at C-17 to the respective testosterone forms. This chain is 17-beta-hydroxysteroid dehydrogenase type 3, found in Homo sapiens (Human).